A 116-amino-acid polypeptide reads, in one-letter code: Large ribosomal subunit protein uL18 (116 aa).

It belongs to the universal ribosomal protein uL18 family. In terms of assembly, part of the 50S ribosomal subunit; part of the 5S rRNA/L5/L18/L25 subcomplex. Contacts the 5S and 23S rRNAs.

Functionally, this is one of the proteins that bind and probably mediate the attachment of the 5S RNA into the large ribosomal subunit, where it forms part of the central protuberance. The sequence is that of Large ribosomal subunit protein uL18 from Exiguobacterium sibiricum (strain DSM 17290 / CCUG 55495 / CIP 109462 / JCM 13490 / 255-15).